Reading from the N-terminus, the 210-residue chain is Probable GTP-binding protein EngB (210 aa).

One can recognise an EngB-type G domain in the interval 25–199 (TGIEVAFAGR…RQKLDTWFSE (175 aa)). GTP-binding positions include 33–40 (GRSNAGKS), 60–64 (GRTQL), 78–81 (DLPG), 145–148 (TKTD), and 178–180 (FSS). Residues S40 and T62 each contribute to the Mg(2+) site.

This sequence belongs to the TRAFAC class TrmE-Era-EngA-EngB-Septin-like GTPase superfamily. EngB GTPase family. It depends on Mg(2+) as a cofactor.

Functionally, necessary for normal cell division and for the maintenance of normal septation. The sequence is that of Probable GTP-binding protein EngB from Escherichia coli O6:K15:H31 (strain 536 / UPEC).